The sequence spans 137 residues: Small ribosomal subunit protein uS12 (137 aa).

The interval 1–57 (MPTINQLIRKGRKSKGSKSNSPALNFGYNSYKKVQTNNSAPQKRGVATRVGTMTPKK) is disordered. Polar residues predominate over residues 32–41 (KKVQTNNSAP). 3-methylthioaspartic acid is present on Asp102.

This sequence belongs to the universal ribosomal protein uS12 family. Part of the 30S ribosomal subunit. Contacts proteins S8 and S17. May interact with IF1 in the 30S initiation complex.

Functionally, with S4 and S5 plays an important role in translational accuracy. In terms of biological role, interacts with and stabilizes bases of the 16S rRNA that are involved in tRNA selection in the A site and with the mRNA backbone. Located at the interface of the 30S and 50S subunits, it traverses the body of the 30S subunit contacting proteins on the other side and probably holding the rRNA structure together. The combined cluster of proteins S8, S12 and S17 appears to hold together the shoulder and platform of the 30S subunit. This Ligilactobacillus salivarius (strain UCC118) (Lactobacillus salivarius) protein is Small ribosomal subunit protein uS12.